The sequence spans 256 residues: Thiazole synthase (256 aa).

The Schiff-base intermediate with DXP role is filled by Lys95. 1-deoxy-D-xylulose 5-phosphate is bound by residues Gly156, 182-183 (AG), and 204-205 (NT).

This sequence belongs to the ThiG family. Homotetramer. Forms heterodimers with either ThiH or ThiS.

It is found in the cytoplasm. The enzyme catalyses [ThiS sulfur-carrier protein]-C-terminal-Gly-aminoethanethioate + 2-iminoacetate + 1-deoxy-D-xylulose 5-phosphate = [ThiS sulfur-carrier protein]-C-terminal Gly-Gly + 2-[(2R,5Z)-2-carboxy-4-methylthiazol-5(2H)-ylidene]ethyl phosphate + 2 H2O + H(+). It participates in cofactor biosynthesis; thiamine diphosphate biosynthesis. In terms of biological role, catalyzes the rearrangement of 1-deoxy-D-xylulose 5-phosphate (DXP) to produce the thiazole phosphate moiety of thiamine. Sulfur is provided by the thiocarboxylate moiety of the carrier protein ThiS. In vitro, sulfur can be provided by H(2)S. In Escherichia coli O17:K52:H18 (strain UMN026 / ExPEC), this protein is Thiazole synthase.